The following is a 625-amino-acid chain: uncharacterized protein (625 aa).

The segment at residues Cys-23–Cys-51 is a DNA-binding region (zn(2)-C6 fungal-type). Residues Gly-93–Ser-113 show a composition bias toward polar residues. Positions Gly-93–Gln-119 are disordered.

It localises to the nucleus. The protein localises to the cytoplasm. It is found in the cytoskeleton. The protein resides in the spindle. This is an uncharacterized protein from Schizosaccharomyces pombe (strain 972 / ATCC 24843) (Fission yeast).